A 718-amino-acid chain; its full sequence is Ophiobolin F synthase oblA (718 aa).

The interval Met1–Glu320 is (7Z)-ophiobola-7,19-dien-3-ol synthase. Positions 93 and 97 each coordinate Mg(2+). Asp93 serves as a coordination point for substrate. A DDXXD 1 motif is present at residues Asp93–Asp97. Substrate-binding positions include Arg180 to Asp183, Asn224, Ser228 to Glu232, and Arg311 to Tyr312. Positions Asn224–Glu232 match the NSE/DTE motif. Positions Leu321–Val718 are geranylfarnesyl diphosphate synthase. Residues Leu346–Thr391 form a disordered region. Residues Gly349–Leu359 show a composition bias toward basic and acidic residues. Residues Lys429, Arg432, and His461 each coordinate isopentenyl diphosphate. Mg(2+) is bound by residues Asp468 and Asp472. Positions Asp468–Asp472 match the DDXXD 2 motif. Dimethylallyl diphosphate is bound at residue Arg477. Arg478 serves as a coordination point for isopentenyl diphosphate. Dimethylallyl diphosphate is bound by residues Lys555, Thr556, Gln594, Asn601, Lys611, and Lys621.

In the N-terminal section; belongs to the terpene synthase family. This sequence in the C-terminal section; belongs to the FPP/GGPP synthase family. Mg(2+) is required as a cofactor.

It catalyses the reaction isopentenyl diphosphate + (2E,6E)-farnesyl diphosphate = (2E,6E,10E)-geranylgeranyl diphosphate + diphosphate. The catalysed reaction is isopentenyl diphosphate + (2E,6E,10E)-geranylgeranyl diphosphate = (2E,6E,10E,14E)-geranylfarnesyl diphosphate + diphosphate. The enzyme catalyses (2E,6E,10E,14E)-geranylfarnesyl diphosphate + H2O = ophiobolin F + diphosphate. It functions in the pathway secondary metabolite biosynthesis; terpenoid biosynthesis. Bifunctional sesterterpene synthase; part of the gene cluster that mediates the biosynthesis of the sesterterpenes ophiobolins, fungal phytotoxins with potential anti-cancer activities. The first step of the pathway is performed by the sesterterpene synthase oblA that possesses both prenyl transferase and terpene cyclase activity, converting isopentenyl diphosphate and dimethylallyl diphosphate into geranylfarnesyl diphosphate (GFPP) and further converting GFPP into ophiobolin F, respectively. Other sesterterpenoids (C(25) terpenoids) are found as minor products of oblA. It is expected that ophiobolin F is then oxidized to ophiobolin A via ophiobolin C and ophiobolin B intermediates by the combined action of the cytochrome P450 monooxygenase oblB and the FAD-dependent oxidoreductase oblC. Although oblB catalyzes multistep oxygenations at C5 and C21/C7 in a relatively efficient manner, it is unable to convert ophiobolin F to ophiobolin C and produces instead several unexpected derivatives. This chain is Ophiobolin F synthase oblA, found in Aspergillus clavatus (strain ATCC 1007 / CBS 513.65 / DSM 816 / NCTC 3887 / NRRL 1 / QM 1276 / 107).